Here is a 1088-residue protein sequence, read N- to C-terminus: Protocadherin-19 (1088 aa).

Positions 1–24 are cleaved as a signal peptide; that stretch reads MHSKDMDFVQMFVCFLLCWTGVDA. Topologically, residues 25 to 678 are extracellular; that stretch reads VFNLKYTVEE…QEQIGPVNLS (654 aa). 6 Cadherin domains span residues 31-130, 131-239, 240-347, 351-454, 455-563, and 569-676; these read TVEE…APRF, PTNH…NPVF, DEPV…APEI, SENS…PPYF, TKPH…TPVM, and VNGT…GPVN. Ca(2+)-binding residues include E34 and E35. N-linked (GlcNAc...) asparagine glycosylation is present at N44. Positions 89 and 91 each coordinate Ca(2+). C94 and C100 are oxidised to a cystine. The Ca(2+) site is built by D122, V123, N124, D125, N126, E141, D156, D158, N162, E200, D213, D231, S232, N233, D234, N235, and E250. A glycan (N-linked (GlcNAc...) asparagine) is linked at N262. Residues D265, D267, and N271 each coordinate Ca(2+). N284 carries an N-linked (GlcNAc...) asparagine glycan. Ca(2+) is bound by residues D306, E308, D339, I340, N341, D342, N343, E361, and D376. The N-linked (GlcNAc...) asparagine glycan is linked to N377. Residues D378, N382, D413, and E415 each coordinate Ca(2+). N421 carries N-linked (GlcNAc...) asparagine glycosylation. The Ca(2+) site is built by D428, D446, E447, N448, D449, N450, E465, D480, D482, N486, N522, E524, and D537. N486 carries an N-linked (GlcNAc...) asparagine glycan. N546 is a glycosylation site (N-linked (GlcNAc...) asparagine). Residues D555, V556, N557, D558, and N559 each coordinate Ca(2+). N570 carries an N-linked (GlcNAc...) asparagine glycan. Positions 594, 596, 600, and 646 each coordinate Ca(2+). N676 carries N-linked (GlcNAc...) asparagine glycosylation. Residues 679 to 699 form a helical membrane-spanning segment; the sequence is LIFIIALGSIAVILFVTMIFV. Residues 700–1088 lie on the Cytoplasmic side of the membrane; that stretch reads AVKCKRDNKE…GSKRLKDIVL (389 aa). Disordered regions lie at residues 792–813, 851–875, 970–1032, and 1067–1088; these read NSRN…GPQQ, DMEG…HDVQ, TFGK…ASST, and TLLQ…DIVL. Residues 859–875 show a composition bias toward basic and acidic residues; that stretch reads DSGHEESDQTDSEHDVQ. A compositionally biased stretch (basic and acidic residues) spans 1071 to 1088; that stretch reads DGRDKESPGSKRLKDIVL.

Homodimer; antiparallel. Interacts with cadherin cdh2; the interaction confers robust cell adhesion activity on pcdh19. In terms of tissue distribution, in the embryo, strongly expressed in the developing nervous system. At 12 hours post fertilization (hpf), shows a segmental expression pattern in the anterior third of the neural keel with strong expression in the presumptive forebrain, cerebellum/rhombomere 1 and rhombomere 4. By 24 hpf, expressed widely in the brain and spinal cord with higher expression levels in the ventral telencephalon, dorsal and central thalamus, optic tectum, central tegmentum, cerebellum and dorsolateral regions of the hindbrain. As development proceeds, expression becomes restricted to the dorsal and/or lateral regions of the central nervous system. Not detected in the spinal cord of two- and three-day old embryos. Expressed in the eye primordium, developing retina, lens and otic vesicle. Expressed in the larval optic tectum at 4 days post-fertilization where it localizes in discrete columns of neurons. Expressed throughout the adult brain with strong expression in the ventromedial telencephalon, periventricular regions of the thalamus and anterior hypothalamus, stratum periventriculare of the optic tectum, dorsal tegmental nucleus, granular regions of the cerebellar body and valvula, and superficial layers of the facial and vagal lobes.

The protein localises to the cell membrane. Functionally, calcium-dependent cell-adhesion protein. Essential for the early stages of neurulation in the anterior neural plate. Shows little cell adhesion activity on its own but exhibits robust homophilic cell adhesion when in a complex with cadherin cdh2 and appears to mediate the adhesion while cdh2 acts as a cell adhesion cofactor in the complex. Functions with cdh2 to coordinate cell adhesion and cell movements during neurulation. Contributes to neural progenitor cell patterning with cdh2 by promoting homophilic cell interactions. Regulates the columnar organization of neurons in the optic tectum. The sequence is that of Protocadherin-19 from Danio rerio (Zebrafish).